The primary structure comprises 174 residues: Crossover junction endodeoxyribonuclease RuvC (174 aa).

Residues D8, E67, and D139 contribute to the active site. Mg(2+) is bound by residues D8, E67, and D139.

It belongs to the RuvC family. In terms of assembly, homodimer which binds Holliday junction (HJ) DNA. The HJ becomes 2-fold symmetrical on binding to RuvC with unstacked arms; it has a different conformation from HJ DNA in complex with RuvA. In the full resolvosome a probable DNA-RuvA(4)-RuvB(12)-RuvC(2) complex forms which resolves the HJ. Mg(2+) is required as a cofactor.

Its subcellular location is the cytoplasm. It catalyses the reaction Endonucleolytic cleavage at a junction such as a reciprocal single-stranded crossover between two homologous DNA duplexes (Holliday junction).. Functionally, the RuvA-RuvB-RuvC complex processes Holliday junction (HJ) DNA during genetic recombination and DNA repair. Endonuclease that resolves HJ intermediates. Cleaves cruciform DNA by making single-stranded nicks across the HJ at symmetrical positions within the homologous arms, yielding a 5'-phosphate and a 3'-hydroxyl group; requires a central core of homology in the junction. The consensus cleavage sequence is 5'-(A/T)TT(C/G)-3'. Cleavage occurs on the 3'-side of the TT dinucleotide at the point of strand exchange. HJ branch migration catalyzed by RuvA-RuvB allows RuvC to scan DNA until it finds its consensus sequence, where it cleaves and resolves the cruciform DNA. The sequence is that of Crossover junction endodeoxyribonuclease RuvC from Pseudomonas aeruginosa (strain LESB58).